A 397-amino-acid polypeptide reads, in one-letter code: Pectate lyase 2 (397 aa).

A signal peptide spans M1–S25. N-linked (GlcNAc...) asparagine glycosylation is present at N37. A disulfide bond links C54 and C71. Residues D194, D218, and D222 each contribute to the Ca(2+) site. The active site involves R274.

It belongs to the polysaccharide lyase 1 family. Amb a subfamily. As to quaternary structure, monomer. It depends on Ca(2+) as a cofactor. In terms of processing, the N-terminus is blocked. Pollen and flowers.

It catalyses the reaction Eliminative cleavage of (1-&gt;4)-alpha-D-galacturonan to give oligosaccharides with 4-deoxy-alpha-D-galact-4-enuronosyl groups at their non-reducing ends.. It participates in glycan metabolism; pectin degradation; 2-dehydro-3-deoxy-D-gluconate from pectin: step 2/5. In terms of biological role, has pectate lyase activity. The polypeptide is Pectate lyase 2 (Ambrosia artemisiifolia (Common ragweed)).